The sequence spans 234 residues: Peptidase E (234 aa).

Catalysis depends on charge relay system residues Ser-120, Asp-135, and His-157.

The protein belongs to the peptidase S51 family.

It is found in the cytoplasm. The catalysed reaction is Dipeptidase E catalyzes the hydrolysis of dipeptides Asp-|-Xaa. It does not act on peptides with N-terminal Glu, Asn or Gln, nor does it cleave isoaspartyl peptides.. Functionally, hydrolyzes dipeptides containing N-terminal aspartate residues. May play a role in allowing the cell to use peptide aspartate to spare carbon otherwise required for the synthesis of the aspartate family of amino acids. The sequence is that of Peptidase E from Salmonella gallinarum (strain 287/91 / NCTC 13346).